A 728-amino-acid polypeptide reads, in one-letter code: Fatty acid oxidation complex subunit alpha (728 aa).

The interval 1-189 (MLYQSETIQV…KNGLIDAVVP (189 aa)) is enoyl-CoA hydratase/isomerase. Position 296 (Asp-296) interacts with substrate. The segment at 311-728 (TIPEYAAVLG…TIAVSTGKTA (418 aa)) is 3-hydroxyacyl-CoA dehydrogenase. Residues Met-324, Asp-343, 400 to 402 (VVE), Lys-407, and Ser-429 contribute to the NAD(+) site. The active-site For 3-hydroxyacyl-CoA dehydrogenase activity is His-450. Asn-453 serves as a coordination point for NAD(+). Substrate-binding residues include Asn-500 and Tyr-660.

The protein in the N-terminal section; belongs to the enoyl-CoA hydratase/isomerase family. It in the C-terminal section; belongs to the 3-hydroxyacyl-CoA dehydrogenase family. As to quaternary structure, heterotetramer of two alpha chains (FadB) and two beta chains (FadA).

It catalyses the reaction a (3S)-3-hydroxyacyl-CoA + NAD(+) = a 3-oxoacyl-CoA + NADH + H(+). It carries out the reaction a (3S)-3-hydroxyacyl-CoA = a (2E)-enoyl-CoA + H2O. The catalysed reaction is a 4-saturated-(3S)-3-hydroxyacyl-CoA = a (3E)-enoyl-CoA + H2O. The enzyme catalyses (3S)-3-hydroxybutanoyl-CoA = (3R)-3-hydroxybutanoyl-CoA. It catalyses the reaction a (3Z)-enoyl-CoA = a 4-saturated (2E)-enoyl-CoA. It carries out the reaction a (3E)-enoyl-CoA = a 4-saturated (2E)-enoyl-CoA. It participates in lipid metabolism; fatty acid beta-oxidation. Functionally, involved in the aerobic and anaerobic degradation of long-chain fatty acids via beta-oxidation cycle. Catalyzes the formation of 3-oxoacyl-CoA from enoyl-CoA via L-3-hydroxyacyl-CoA. It can also use D-3-hydroxyacyl-CoA and cis-3-enoyl-CoA as substrate. The polypeptide is Fatty acid oxidation complex subunit alpha (Photorhabdus laumondii subsp. laumondii (strain DSM 15139 / CIP 105565 / TT01) (Photorhabdus luminescens subsp. laumondii)).